The sequence spans 353 residues: Protein pelota homolog (353 aa).

Belongs to the eukaryotic release factor 1 family. Pelota subfamily. Monomer. It depends on a divalent metal cation as a cofactor.

The protein localises to the cytoplasm. May function in recognizing stalled ribosomes, interact with stem-loop structures in stalled mRNA molecules, and effect endonucleolytic cleavage of the mRNA. May play a role in the release non-functional ribosomes and degradation of damaged mRNAs. Has endoribonuclease activity. This Methanobrevibacter smithii (strain ATCC 35061 / DSM 861 / OCM 144 / PS) protein is Protein pelota homolog.